A 226-amino-acid chain; its full sequence is Cytidylate kinase (226 aa).

An ATP-binding site is contributed by 11 to 19 (GPAAAGKST).

This sequence belongs to the cytidylate kinase family. Type 1 subfamily.

Its subcellular location is the cytoplasm. It carries out the reaction CMP + ATP = CDP + ADP. The enzyme catalyses dCMP + ATP = dCDP + ADP. This Bacillus licheniformis (strain ATCC 14580 / DSM 13 / JCM 2505 / CCUG 7422 / NBRC 12200 / NCIMB 9375 / NCTC 10341 / NRRL NRS-1264 / Gibson 46) protein is Cytidylate kinase.